The following is a 124-amino-acid chain: Fluoride-specific ion channel FluC 2 (124 aa).

3 consecutive transmembrane segments (helical) span residues 36–56 (TFLINVSGSVVMGLIAGYLAF), 66–86 (LFVMTGVLGGYTTFSAFSLDT), and 100–120 (LYAIGSVVLAVVGLFAGLALV). G74 and T77 together coordinate Na(+).

Belongs to the fluoride channel Fluc/FEX (TC 1.A.43) family.

The protein localises to the cell inner membrane. The catalysed reaction is fluoride(in) = fluoride(out). Na(+) is not transported, but it plays an essential structural role and its presence is essential for fluoride channel function. Fluoride-specific ion channel. Important for reducing fluoride concentration in the cell, thus reducing its toxicity. The protein is Fluoride-specific ion channel FluC 2 of Nitrobacter hamburgensis (strain DSM 10229 / NCIMB 13809 / X14).